Here is a 430-residue protein sequence, read N- to C-terminus: Phosphoribosylamine--glycine ligase (430 aa).

The ATP-grasp domain maps to 109–314 (RGLMNKYGID…FLTIAEHIIN (206 aa)). 136 to 192 (IREYPGDLAVKPTGLTGGKGVKVMGEQVDREGAVEYAMTLKDQVIILEERLLGEEFT) provides a ligand contact to ATP. Mg(2+) is bound by residues Q272, E284, and N286. Mn(2+) contacts are provided by Q272, E284, and N286.

Belongs to the GARS family. Requires Mg(2+) as cofactor. The cofactor is Mn(2+).

The enzyme catalyses 5-phospho-beta-D-ribosylamine + glycine + ATP = N(1)-(5-phospho-beta-D-ribosyl)glycinamide + ADP + phosphate + H(+). Its pathway is purine metabolism; IMP biosynthesis via de novo pathway; N(1)-(5-phospho-D-ribosyl)glycinamide from 5-phospho-alpha-D-ribose 1-diphosphate: step 2/2. This Methanocorpusculum labreanum (strain ATCC 43576 / DSM 4855 / Z) protein is Phosphoribosylamine--glycine ligase.